The chain runs to 239 residues: 7-cyano-7-deazaguanine synthase (239 aa).

Position 12-22 (12-22 (FSGGQDSATCL)) interacts with ATP. 4 residues coordinate Zn(2+): Cys200, Cys215, Cys218, and Cys221.

Belongs to the QueC family. Zn(2+) is required as a cofactor.

It carries out the reaction 7-carboxy-7-deazaguanine + NH4(+) + ATP = 7-cyano-7-deazaguanine + ADP + phosphate + H2O + H(+). It functions in the pathway purine metabolism; 7-cyano-7-deazaguanine biosynthesis. Catalyzes the ATP-dependent conversion of 7-carboxy-7-deazaguanine (CDG) to 7-cyano-7-deazaguanine (preQ(0)). This chain is 7-cyano-7-deazaguanine synthase, found in Hyphomonas neptunium (strain ATCC 15444).